The primary structure comprises 79 residues: Conotoxin 12 (79 aa).

The N-terminal stretch at 1–22 (MKLTCVLIITVLFLTASQLITA) is a signal peptide. The propeptide occupies 23–47 (DYSRDQRQYRAVRLGDEMRNFKGAR). Cystine bridges form between cysteine 49-cysteine 62, cysteine 56-cysteine 67, and cysteine 61-cysteine 77.

It belongs to the conotoxin O1 superfamily. As to expression, expressed by the venom duct.

It is found in the secreted. This chain is Conotoxin 12, found in Conus vexillum (Flag cone).